A 338-amino-acid polypeptide reads, in one-letter code: Phosphate acyltransferase (338 aa).

It belongs to the PlsX family. Homodimer. Probably interacts with PlsY.

The protein localises to the cytoplasm. It carries out the reaction a fatty acyl-[ACP] + phosphate = an acyl phosphate + holo-[ACP]. It functions in the pathway lipid metabolism; phospholipid metabolism. Its function is as follows. Catalyzes the reversible formation of acyl-phosphate (acyl-PO(4)) from acyl-[acyl-carrier-protein] (acyl-ACP). This enzyme utilizes acyl-ACP as fatty acyl donor, but not acyl-CoA. The sequence is that of Phosphate acyltransferase from Mannheimia succiniciproducens (strain KCTC 0769BP / MBEL55E).